Reading from the N-terminus, the 423-residue chain is Histidine--tRNA ligase (423 aa).

It belongs to the class-II aminoacyl-tRNA synthetase family. As to quaternary structure, homodimer.

It localises to the cytoplasm. It catalyses the reaction tRNA(His) + L-histidine + ATP = L-histidyl-tRNA(His) + AMP + diphosphate + H(+). In Anoxybacillus flavithermus (strain DSM 21510 / WK1), this protein is Histidine--tRNA ligase.